The sequence spans 191 residues: Prostaglandin-H2 D-isomerase (191 aa).

The signal sequence occupies residues 1–24 (MATPNRPWMGLLLLGVLGVLQTPA). Asn-51 carries N-linked (GlcNAc...) asparagine glycosylation. Residue Cys-65 is the Nucleophile of the active site. Residue Asn-78 is glycosylated (N-linked (GlcNAc...) asparagine). Cys-89 and Cys-186 are oxidised to a cystine.

It belongs to the calycin superfamily. Lipocalin family. Monomer. As to expression, in the male reproductive system, it is expressed in the testis and epididymis, and is secreted into the seminal fluid.

It is found in the rough endoplasmic reticulum. It localises to the nucleus membrane. The protein localises to the golgi apparatus. Its subcellular location is the cytoplasm. The protein resides in the perinuclear region. It is found in the secreted. The enzyme catalyses prostaglandin H2 = prostaglandin D2. Functionally, catalyzes the conversion of PGH2 to PGD2, a prostaglandin involved in smooth muscle contraction/relaxation and a potent inhibitor of platelet aggregation. Involved in a variety of CNS functions, such as sedation, NREM sleep and PGE2-induced allodynia, and may have an anti-apoptotic role in oligodendrocytes. Binds small non-substrate lipophilic molecules, including biliverdin, bilirubin, retinal, retinoic acid and thyroid hormone, and may act as a scavenger for harmful hydrophobic molecules and as a secretory retinoid and thyroid hormone transporter. Possibly involved in development and maintenance of the blood-brain, blood-retina, blood-aqueous humor and blood-testis barrier. It is likely to play important roles in both maturation and maintenance of the central nervous system and male reproductive system. Involved in PLA2G3-dependent maturation of mast cells. PLA2G3 is secreted by immature mast cells and acts on nearby fibroblasts upstream to PTDGS to synthesize PGD2, which in turn promotes mast cell maturation and degranulation via PTGDR. In Ovis aries (Sheep), this protein is Prostaglandin-H2 D-isomerase (PTGDS).